A 140-amino-acid chain; its full sequence is Class I hydrophobin 1 (140 aa).

Residues 1–18 (MKFAAVVVLAAAAAAVSA) form the signal peptide. Residues 22-60 (AQRMARGLPPKAPIRRHGTPADTEKRSHPSSTGGGQCNT) are disordered. 4 disulfides stabilise this stretch: C58/C119, C65/C113, C66/C99, and C120/C133.

This sequence belongs to the fungal hydrophobin family. Self-assembles to form functional amyloid fibrils called rodlets. Self-assembly into fibrillar rodlets occurs spontaneously at hydrophobic:hydrophilic interfaces and the rodlets further associate laterally to form amphipathic monolayers.

The protein localises to the secreted. It is found in the cell wall. In terms of biological role, aerial growth, conidiation, and dispersal of filamentous fungi in the environment rely upon a capability of their secreting small amphipathic proteins called hydrophobins (HPBs) with low sequence identity. Class I can self-assemble into an outermost layer of rodlet bundles on aerial cell surfaces, conferring cellular hydrophobicity that supports fungal growth, development and dispersal; whereas Class II form highly ordered films at water-air interfaces through intermolecular interactions but contribute nothing to the rodlet structure. In Pisolithus tinctorius (Dead man's foot), this protein is Class I hydrophobin 1.